We begin with the raw amino-acid sequence, 196 residues long: Large ribosomal subunit protein uL5 (196 aa).

The protein belongs to the universal ribosomal protein uL5 family. Part of the 50S ribosomal subunit; part of the 5S rRNA/L5/L18/L25 subcomplex. Contacts the 5S rRNA and the P site tRNA. Forms a bridge to the 30S subunit in the 70S ribosome.

Its function is as follows. This is one of the proteins that bind and probably mediate the attachment of the 5S RNA into the large ribosomal subunit, where it forms part of the central protuberance. In the 70S ribosome it contacts protein S13 of the 30S subunit (bridge B1b), connecting the 2 subunits; this bridge is implicated in subunit movement. Contacts the P site tRNA; the 5S rRNA and some of its associated proteins might help stabilize positioning of ribosome-bound tRNAs. This Rhodopirellula baltica (strain DSM 10527 / NCIMB 13988 / SH1) protein is Large ribosomal subunit protein uL5.